A 1851-amino-acid polypeptide reads, in one-letter code: Chitin synthase (1851 aa).

The tract at residues 1-21 is disordered; the sequence is MQYHQHQHQFPGPGPSHTSVY. Over 1 to 108 the chain is Cytoplasmic; that stretch reads MQYHQHQHQF…KDTLYNGFLQ (108 aa). A helical membrane pass occupies residues 109–129; that stretch reads VLKMITFVALFVTTLGSSILA. Residues 130 to 168 lie on the Extracellular side of the membrane; that stretch reads KLSLLVMAAGLGQAGHNISICPDKIPESPKNSVLISPKN. Asn146 carries an N-linked (GlcNAc...) asparagine glycan. A helical transmembrane segment spans residues 169-189; the sequence is AAKWAWALLLAICIPELLCFA. The Cytoplasmic portion of the chain corresponds to 190–208; it reads RSLHRSLFRKVRGPSFLQF. Residues 209 to 229 traverse the membrane as a helical segment; sequence LLVFTVESVHAFGLGALVFAI. Residues 230-234 are Extracellular-facing; sequence MPRGM. Residues 235 to 255 traverse the membrane as a helical segment; sequence VITMLQLGNSLCLIPSLLLPL. Residues 256 to 261 are Cytoplasmic-facing; it reads SRSRSR. Residues 262–282 traverse the membrane as a helical segment; it reads WLPLLLLLDGSAILAQSSAAI. Topologically, residues 283–291 are extracellular; it reads WRGSIPLER. The helical transmembrane segment at 292–312 threads the bilayer; that stretch reads FGFVFLCTSLISIAWWQNFVH. Topologically, residues 313-337 are cytoplasmic; that stretch reads PHSFLPATRFFAHYAAKLRECRSKT. Residues 338-358 traverse the membrane as a helical segment; sequence FVVLSPWKCLIFTFCMFQFVP. Topologically, residues 359–544 are extracellular; the sequence is PQIPFRELLQ…ELNQFTTAND (186 aa). 2 N-linked (GlcNAc...) asparagine glycosylation sites follow: Asn385 and Asn435. Positions 432–522 are disordered; sequence LFRNGTRRPP…DADEQEEEEE (91 aa). Positions 442-454 are enriched in basic and acidic residues; that stretch reads KKEEVKKNKMDSK. A compositionally biased stretch (basic residues) spans 455–465; it reads KKTKKLKKKKG. Positions 466 to 478 are enriched in low complexity; sequence GNNNATSTNSSEK. N-linked (GlcNAc...) asparagine glycans are attached at residues Asn469 and Asn474. Positions 513–522 are enriched in acidic residues; sequence DADEQEEEEE. Residues 545–565 traverse the membrane as a helical segment; that stretch reads ALWLVFVQAGSVLLCQLCAKF. Residues 566–573 lie on the Cytoplasmic side of the membrane; sequence ACKVVMQR. Residues 574–594 form a helical membrane-spanning segment; that stretch reads VGLALPVVLSIPFGILFLAYS. Residues 595-631 lie on the Extracellular side of the membrane; that stretch reads CRQKATNPCHLSEWMSKELFWQCPTRPFHWQRFFREQ. The chain crosses the membrane as a helical span at residues 632–652; that stretch reads PNLLWLCWWLSQCWITIHLWL. At 653–1124 the chain is on the cytoplasmic side; that stretch reads PRQERLAKSE…VSIWYIAYQL (472 aa). The segment at 693 to 718 is disordered; the sequence is SEDIDTEEEANEGGGEQEDGNSSTHT. Positions 696 to 711 are enriched in acidic residues; the sequence is IDTEEEANEGGGEQED. Residues 1125–1145 traverse the membrane as a helical segment; it reads VMLFSSVLGPGTIFLMIVGAI. The Extracellular portion of the chain corresponds to 1146–1154; sequence SISFNIDTR. The helical transmembrane segment at 1155-1175 threads the bilayer; it reads LALLIVTTPVLCFCVCCLTCG. The Cytoplasmic segment spans residues 1176-1179; sequence TETQ. A helical transmembrane segment spans residues 1180–1200; the sequence is LLLAQVIGALFAMLMTAVIVG. Residues 1201-1209 lie on the Extracellular side of the membrane; that stretch reads TSLQIQKDG. Residues 1210–1230 traverse the membrane as a helical segment; the sequence is LLSPHSIFLFTVLGSWSFSAL. The Cytoplasmic segment spans residues 1231-1235; sequence LHPLE. Residues 1236–1256 form a helical membrane-spanning segment; the sequence is FGCLLPCGLYFLAIPCMYMLL. At 1257 to 1461 the chain is on the extracellular side; it reads PVYSLCNLNT…QRGLNELRNT (205 aa). Asn1274 is a glycosylation site (N-linked (GlcNAc...) asparagine). The stretch at 1329-1383 forms a coiled coil; that stretch reads CADETVEVRKLDENFRKIERKLQSLERRTNGQGNNAEEEGKEEEETGKSEQERKE. The interval 1350–1402 is disordered; the sequence is LQSLERRTNGQGNNAEEEGKEEEETGKSEQERKEGREEGKEEEGKMSKRKKEE. A compositionally biased stretch (acidic residues) spans 1364-1373; it reads AEEEGKEEEE. Positions 1374 to 1402 are enriched in basic and acidic residues; sequence TGKSEQERKEGREEGKEEEGKMSKRKKEE. The chain crosses the membrane as a helical span at residues 1462 to 1482; sequence CCSAFFMVNIVFIIVVLVLQL. Residues 1483-1527 lie on the Cytoplasmic side of the membrane; the sequence is QKDCLHIEWPLGPLVNQTRVQCGGGGGRDFEGEEWIMSRLQLEPM. The helical transmembrane segment at 1528–1548 threads the bilayer; that stretch reads GFVFIVFFLIILFIQFLAMLF. Topologically, residues 1549 to 1851 are extracellular; it reads HRFGTFTHII…FLGTTNKRAK (303 aa). The interval 1626–1658 is disordered; sequence GKRQQNAQIPPRCEKGGNERGEESPTSLPAPPV. Positions 1637–1648 are enriched in basic and acidic residues; that stretch reads RCEKGGNERGEE. An N-linked (GlcNAc...) asparagine glycan is attached at Asn1660. Residues 1765-1851 form a disordered region; sequence HSIFPSSSES…FLGTTNKRAK (87 aa). The segment covering 1781–1822 has biased composition (basic and acidic residues); it reads GGGRGRGREQERDKCLEGKKEKFRQRVEEGPARCHRLEELFG. Residues 1823-1834 show a composition bias toward basic residues; the sequence is KSRKGGPQKRGK.

Belongs to the chitin synthase family. Class IV subfamily. May require proteolytic cleavage for activation.

It is found in the cell membrane. It catalyses the reaction [(1-&gt;4)-N-acetyl-beta-D-glucosaminyl](n) + UDP-N-acetyl-alpha-D-glucosamine = [(1-&gt;4)-N-acetyl-beta-D-glucosaminyl](n+1) + UDP + H(+). Functionally, required for the synthesis of chitin. In Meloidogyne artiellia (British root-knot nematode), this protein is Chitin synthase.